The following is a 205-amino-acid chain: Urease accessory protein UreG (205 aa).

11 to 18 is a GTP binding site; that stretch reads GPVGSGKT.

The protein belongs to the SIMIBI class G3E GTPase family. UreG subfamily. Homodimer. UreD, UreF and UreG form a complex that acts as a GTP-hydrolysis-dependent molecular chaperone, activating the urease apoprotein by helping to assemble the nickel containing metallocenter of UreC. The UreE protein probably delivers the nickel.

The protein resides in the cytoplasm. Functionally, facilitates the functional incorporation of the urease nickel metallocenter. This process requires GTP hydrolysis, probably effectuated by UreG. The chain is Urease accessory protein UreG from Prochlorococcus marinus (strain NATL2A).